The primary structure comprises 351 residues: Calcium uniporter protein, mitochondrial (351 aa).

A mitochondrion-targeting transit peptide spans 1 to 50; sequence MAAAAGRSLLLLLSSRGGGGGGAGGCGALTAGCFPGLGVSRHRQQQHHRT. Residues 51–233 are Mitochondrial matrix-facing; that stretch reads VHQRIASWQN…ISRKAEKRTT (183 aa). S57 and S92 each carry phosphoserine; by CaMK2. Residues 75–165 form an N-terminal MCU domain region; it reads VTVVYQNGLP…LTYHVRPPKR (91 aa). C97 is modified (S-glutathionyl cysteine). Residues 192–223 are a coiled coil; sequence IEQHQLNKERELIERLEDLKEQLAPLEKVRIE. Residues 234–255 form a helical membrane-spanning segment; the sequence is LVLWGGLAYMATQFGILARLTW. At 256 to 262 the chain is on the mitochondrial intermembrane side; it reads WEYSWDI. The Selectivity filter motif lies at 260–268; sequence WDIMEPVTY. The helical transmembrane segment at 263–284 threads the bilayer; it reads MEPVTYFITYGSAMAMYAYFVM. E264 serves as a coordination point for Ca(2+). The juxtamembrane helix stretch occupies residues 285-290; it reads TRQEYV. The Mitochondrial matrix segment spans residues 285 to 351; that stretch reads TRQEYVYPEA…LPLRQIGEKD (67 aa). Residues 311 to 339 adopt a coiled-coil conformation; the sequence is RFDLEKYNQLKDAIAQAEMDLKRLRDPLQ. K332 bears the N6-acetyllysine mark.

The protein belongs to the MCU (TC 1.A.77) family. As to quaternary structure, homotetramer. Component of the uniplex complex, composed of MCU, EMRE/SMDT1, MICU1 and MICU2 (or MICU3) in a 4:4:1:1 stoichiometry. Interacts with CCDC109B/MCUB; this inhibits channel activity. Interacts with MCUR1. Interactions with MICU1 and MCUR1 are mutually exclusive. Interacts with SLC25A23. Post-translationally, phosphorylation by CaMK2 in heart leads to increased MCU current. The regulation of MCU by CaMK2 is however subject to discussion: another group was unable to reproduce these results. Phosphorylated on tyrosines by PTK2B/PYK2, promoting oligomerization. Glutathionylation at Cys-97 in response to reactive oxygen species (ROS) promotes MCU higher-order assembly, leading to constitutive activation of the MCU channel and mitochondrial calcium overload. In terms of processing, undergoes proteolytic degradation by SPG7.

It is found in the mitochondrion inner membrane. The enzyme catalyses Ca(2+)(in) = Ca(2+)(out). With respect to regulation, MCU channel activity is regulated by the heterodimer composed of MICU1 and either MICU2 or MICU3, which act as calcium-sensors. At low calcium levels, MICU1 occludes the pore of the MCU channel, preventing mitochondrial calcium uptake. At higher calcium levels, calcium-binding to MICU1 and MICU2 (or MICU3) induces a conformational change that weakens MCU-MICU1 interactions and moves the MICU1-MICU2 heterodimer away from the pore, allowing calcium permeation through the channel. MCU channel activity is gated by EMRE/SMDT1 via the juxtamembrane helix loop. Inhibited by ruthenium red or its derivative Ru360. In terms of biological role, channel-forming and calcium-conducting subunit of the mitochondrial inner membrane calcium uniporter complex (uniplex), which mediates calcium uptake into the mitochondrial matrix. MCU channel activity is regulated by the calcium-sensor subunits of the uniplex MICU1 and MICU2 (or MICU3). Mitochondrial calcium homeostasis plays key roles in cellular physiology and regulates ATP production, cytoplasmic calcium signals and activation of cell death pathways. Involved in buffering the amplitude of systolic calcium rises in cardiomyocytes. While dispensable for baseline homeostatic cardiac function, acts as a key regulator of short-term mitochondrial calcium loading underlying a 'fight-or-flight' response during acute stress: acts by mediating a rapid increase of mitochondrial calcium in pacemaker cells. Participates in mitochondrial permeability transition during ischemia-reperfusion injury. Mitochondrial calcium uptake in skeletal muscle cells is involved in muscle size in adults. Regulates synaptic vesicle endocytosis kinetics in central nerve terminal. Regulates glucose-dependent insulin secretion in pancreatic beta-cells by regulating mitochondrial calcium uptake. Involved in antigen processing and presentation. This chain is Calcium uniporter protein, mitochondrial, found in Homo sapiens (Human).